The sequence spans 232 residues: 6-phosphogluconolactonase (232 aa).

This sequence belongs to the glucosamine/galactosamine-6-phosphate isomerase family. 6-phosphogluconolactonase subfamily.

The catalysed reaction is 6-phospho-D-glucono-1,5-lactone + H2O = 6-phospho-D-gluconate + H(+). Its pathway is carbohydrate degradation; pentose phosphate pathway; D-ribulose 5-phosphate from D-glucose 6-phosphate (oxidative stage): step 2/3. In terms of biological role, hydrolysis of 6-phosphogluconolactone to 6-phosphogluconate. The chain is 6-phosphogluconolactonase (pgl) from Haemophilus influenzae (strain ATCC 51907 / DSM 11121 / KW20 / Rd).